The chain runs to 118 residues: Ribulose bisphosphate carboxylase small subunit 2 (118 aa).

This sequence belongs to the RuBisCO small chain family. Heterohexadecamer of 8 large and 8 small subunits.

Functionally, ruBisCO catalyzes two reactions: the carboxylation of D-ribulose 1,5-bisphosphate, the primary event in carbon dioxide fixation, as well as the oxidative fragmentation of the pentose substrate. Both reactions occur simultaneously and in competition at the same active site. Although the small subunit is not catalytic it is essential for maximal activity. The protein is Ribulose bisphosphate carboxylase small subunit 2 of Acidithiobacillus ferrooxidans (Thiobacillus ferrooxidans).